The chain runs to 666 residues: Frizzled-3 (666 aa).

The N-terminal stretch at 1–22 is a signal peptide; it reads MAVSWIVFDLWLLTVFLGQIGG. The FZ domain maps to 23–136; sequence HSLFSCEPIT…CSRFPDCDEP (114 aa). The Extracellular portion of the chain corresponds to 23–205; it reads HSLFSCEPIT…REELSFARYF (183 aa). Intrachain disulfides connect Cys-28-Cys-89, Cys-36-Cys-82, Cys-73-Cys-110, Cys-99-Cys-133, and Cys-103-Cys-127. Asn-42 carries N-linked (GlcNAc...) asparagine glycosylation. A helical transmembrane segment spans residues 206–226; that stretch reads IGLISIICLSATLFTFLTFLI. At 227-237 the chain is on the cytoplasmic side; it reads DVTRFRYPERP. Residues 238–258 form a helical membrane-spanning segment; it reads IIFYAVCYMMVSLIFFIGFLL. Over 259–288 the chain is Extracellular; it reads EDRVACNASSPAQYKASTVTQGSHNKACTM. A glycan (N-linked (GlcNAc...) asparagine) is linked at Asn-265. Residues 289 to 309 form a helical membrane-spanning segment; it reads LFMVLYFFTMAGSVWWVILTI. Residues 310–328 are Cytoplasmic-facing; the sequence is TWFLAAVPKWGSEAIEKKA. The helical transmembrane segment at 329–349 threads the bilayer; sequence LLFHASAWGIPGTLTIILLAM. Topologically, residues 350–374 are extracellular; it reads NKIEGDNISGVCFVGLYDVDALRYF. N-linked (GlcNAc...) asparagine glycosylation occurs at Asn-356. The helical transmembrane segment at 375–395 threads the bilayer; it reads VLAPLCLYVVVGVSLLLAGII. The Cytoplasmic segment spans residues 396-420; it reads SLNRVRIEIPLEKENQDKLVKFMIR. Residues 421-441 traverse the membrane as a helical segment; that stretch reads IGVFSILYLVPLLVVIGCYFY. The Extracellular portion of the chain corresponds to 442 to 477; the sequence is EQAYRGIWETTWIQERCREYHIPCPYQVTQMSRPDL. The helical transmembrane segment at 478–498 threads the bilayer; that stretch reads ILFLMKYLMALIVGIPSIFWV. The Cytoplasmic segment spans residues 499 to 666; that stretch reads GSKKTCFEWA…RVIEEDGTSA (168 aa). The Lys-Thr-X-X-X-Trp motif, mediates interaction with the PDZ domain of Dvl family members motif lies at 502 to 507; the sequence is KTCFEW. The disordered stretch occupies residues 538 to 666; that stretch reads RDPNTPIIRK…RVIEEDGTSA (129 aa). Polar residues predominate over residues 550–565; that stretch reads GTSTQGTSTHASSTQL. Basic and acidic residues predominate over residues 617–638; the sequence is LTDHSRHSSSHRLNEQSRHSSI. Polar residues predominate over residues 639 to 656; sequence RDLSNNPMTHITHGTSMN.

This sequence belongs to the G-protein coupled receptor Fz/Smo family. Interacts with VANGL2. Ubiquitinated by ZNRF3, leading to its degradation by the proteasome. In terms of tissue distribution, expressed in the cortex, diencephalon, rostral brainstem and little or no staining is seen in the striatum or cerebellum. Expressed in both hair cells and supporting cells in the utricle, saccule, cristae and the organ of Corti in the inner ear (at protein level). Highly expressed in the CNS. In skin, it is restricted to the epidermis and to the developing hair follicle.

It is found in the membrane. The protein resides in the cell membrane. It localises to the cell surface. Its subcellular location is the apical cell membrane. Functionally, receptor for Wnt proteins. Most of frizzled receptors are coupled to the beta-catenin canonical signaling pathway, which leads to the activation of disheveled proteins, inhibition of GSK-3 kinase, nuclear accumulation of beta-catenin and activation of Wnt target genes. A second signaling pathway involving PKC and calcium fluxes has been seen for some family members, but it is not yet clear if it represents a distinct pathway or if it can be integrated in the canonical pathway, as PKC seems to be required for Wnt-mediated inactivation of GSK-3 kinase. Both pathways seem to involve interactions with G-proteins. Activation by Wnt5A stimulates PKC activity via a G-protein-dependent mechanism. Involved in transduction and intercellular transmission of polarity information during tissue morphogenesis and/or in differentiated tissues. Plays a role in controlling early axon growth and guidance processes necessary for the formation of a subset of central and peripheral major fiber tracts. Required for the development of major fiber tracts in the central nervous system, including: the anterior commissure, the corpus callosum, the thalamocortical, corticothalamic and nigrostriatal tracts, the corticospinal tract, the fasciculus retroflexus, the mammillothalamic tract, the medial lemniscus, and ascending fiber tracts from the spinal cord to the brain. In the peripheral nervous system, controls axon growth in distinct populations of cranial and spinal motor neurons, including the facial branchimotor nerve, the hypoglossal nerve, the phrenic nerve, and motor nerves innervating dorsal limbs. Involved in the migration of cranial neural crest cells. May also be implicated in the transmission of sensory information from the trunk and limbs to the brain. Controls commissural sensory axons guidance after midline crossing along the anterior-posterior axis in the developing spinal cord in a Wnt-dependent signaling pathway. Together with FZD6, is involved in the neural tube closure and plays a role in the regulation of the establishment of planar cell polarity (PCP), particularly in the orientation of asymmetric bundles of stereocilia on the apical faces of a subset of auditory and vestibular sensory cells located in the inner ear. Promotes neurogenesis by maintaining sympathetic neuroblasts within the cell cycle in a beta-catenin-dependent manner. The chain is Frizzled-3 (Fzd3) from Mus musculus (Mouse).